The following is a 326-amino-acid chain: Flavanone 3-dioxygenase 3 (326 aa).

Polar residues predominate over residues 1-15 (MSDTSKGIPQEQLPS). Residues 1–21 (MSDTSKGIPQEQLPSQELHPP) are disordered. Positions 175–276 (EGLQLLSVNC…RISLASIHGF (102 aa)) constitute a Fe2OG dioxygenase domain. Fe cation is bound by residues His-200, Asp-202, and His-257. Residue Arg-267 participates in 2-oxoglutarate binding.

It belongs to the iron/ascorbate-dependent oxidoreductase family. It depends on Fe(2+) as a cofactor. L-ascorbate serves as cofactor. Expressed at very low levels in roots, leaves, stems and seeds.

It catalyses the reaction a (2S)-flavan-4-one + 2-oxoglutarate + O2 = a (2R,3R)-dihydroflavonol + succinate + CO2. It participates in secondary metabolite biosynthesis; flavonoid biosynthesis. In terms of biological role, catalyzes the 3-beta-hydroxylation of 2S-flavanones to 2R,3R-dihydroflavonols which are intermediates in the biosynthesis of flavonols, anthocyanidins, catechins and proanthocyanidins in plants. Converts (2S)-eriodictyol to (+)-taxifolin and (2S)-naringenin to (+)-(2R/3R)-dihydrokaempferol in vitro. The protein is Flavanone 3-dioxygenase 3 of Oryza sativa subsp. japonica (Rice).